Consider the following 155-residue polypeptide: Zinc finger HIT domain-containing protein 3 (155 aa).

Zn(2+)-binding residues include Cys-11, Cys-14, Cys-22, Cys-25, Cys-30, Cys-34, His-38, and Cys-42. The HIT-type zinc-finger motif lies at 11-42 (CVICLEKPKYRCPACRVPYCSVVCFRKHKEQC). Ser-80 is subject to Phosphoserine.

As to quaternary structure, thyroid receptor interacting proteins (TRIPs) specifically interact with the ligand binding domain of the thyroid receptor (TR). Requires the presence of thyroid hormone for its interaction. Interacts with NUFIP1. Interacts (via HIT-type zinc finger) with the RUVBL1/RUVBL2 complex in the presence of ADP.

Its subcellular location is the cytoplasm. The protein resides in the nucleus. The protein is Zinc finger HIT domain-containing protein 3 (ZNHIT3) of Homo sapiens (Human).